We begin with the raw amino-acid sequence, 547 residues long: Chaperonin GroEL (547 aa).

Residues 30–33 (TLGP), K51, 87–91 (DGTTT), G415, and D495 each bind ATP.

It belongs to the chaperonin (HSP60) family. As to quaternary structure, forms a cylinder of 14 subunits composed of two heptameric rings stacked back-to-back. Interacts with the co-chaperonin GroES.

The protein resides in the cytoplasm. It catalyses the reaction ATP + H2O + a folded polypeptide = ADP + phosphate + an unfolded polypeptide.. In terms of biological role, together with its co-chaperonin GroES, plays an essential role in assisting protein folding. The GroEL-GroES system forms a nano-cage that allows encapsulation of the non-native substrate proteins and provides a physical environment optimized to promote and accelerate protein folding. The polypeptide is Chaperonin GroEL (Pasteurella multocida (strain Pm70)).